The chain runs to 308 residues: Isoflavone reductase-like protein (308 aa).

NADP(+)-binding positions include 11-17 (GGTGYIG), Arg36, and Lys45. Lys133 serves as the catalytic Proton acceptor. Position 137 (Arg137) interacts with NADP(+).

This sequence belongs to the NmrA-type oxidoreductase family. Isoflavone reductase subfamily. Homodimer.

It localises to the cytoplasm. The chain is Isoflavone reductase-like protein from Olea europaea (Common olive).